Consider the following 556-residue polypeptide: Dihydroxy-acid dehydratase (556 aa).

Cys47 lines the [2Fe-2S] cluster pocket. Asp79 lines the Mg(2+) pocket. Cys120 provides a ligand contact to [2Fe-2S] cluster. The Mg(2+) site is built by Asp121 and Lys122. Lys122 carries the N6-carboxylysine modification. Cys192 is a binding site for [2Fe-2S] cluster. Position 444 (Glu444) interacts with Mg(2+). The Proton acceptor role is filled by Ser470.

This sequence belongs to the IlvD/Edd family. As to quaternary structure, homodimer. It depends on [2Fe-2S] cluster as a cofactor. The cofactor is Mg(2+).

It carries out the reaction (2R)-2,3-dihydroxy-3-methylbutanoate = 3-methyl-2-oxobutanoate + H2O. The enzyme catalyses (2R,3R)-2,3-dihydroxy-3-methylpentanoate = (S)-3-methyl-2-oxopentanoate + H2O. It functions in the pathway amino-acid biosynthesis; L-isoleucine biosynthesis; L-isoleucine from 2-oxobutanoate: step 3/4. Its pathway is amino-acid biosynthesis; L-valine biosynthesis; L-valine from pyruvate: step 3/4. In terms of biological role, functions in the biosynthesis of branched-chain amino acids. Catalyzes the dehydration of (2R,3R)-2,3-dihydroxy-3-methylpentanoate (2,3-dihydroxy-3-methylvalerate) into 2-oxo-3-methylpentanoate (2-oxo-3-methylvalerate) and of (2R)-2,3-dihydroxy-3-methylbutanoate (2,3-dihydroxyisovalerate) into 2-oxo-3-methylbutanoate (2-oxoisovalerate), the penultimate precursor to L-isoleucine and L-valine, respectively. The chain is Dihydroxy-acid dehydratase from Prochlorococcus marinus (strain MIT 9303).